Here is a 70-residue protein sequence, read N- to C-terminus: Melittin (70 aa).

The N-terminal stretch at 1-21 (MKFLVNVALVFMVVYISYIYA) is a signal peptide. A propeptide spans 22-43 (APEPEPAPEPEAEADAEADPEA) (removed by a dipeptidylpeptidase). The residue at position 44 (G44) is an N-formylglycine; partial. Q69 carries the post-translational modification Glutamine amide.

Belongs to the melittin family. As to quaternary structure, monomer (in solution and for integration into membranes), homotetramer (in solution and potentially as a toroidal pore in membranes), and potenially homomultimer (as a toroidal pore in membranes). Expressed by the venom gland.

Its subcellular location is the secreted. The protein localises to the target cell membrane. In terms of biological role, melittin: Main toxin of bee venom with strong antimicrobial activity and hemolytic activity. It has enhancing effects on bee venom phospholipase A2 activity. This amphipathic toxin binds to negatively charged membrane surface and forms pore by inserting into lipid bilayers inducing the leakage of ions and molecules and the enhancement of permeability that ultimately leads to cell lysis. It acts as a voltage-gated pore with higher selectivity for anions over cations. The ion conductance has been shown to be voltage-dependent. Self-association of melittin in membranes is promoted by high ionic strength, but not by the presence of negatively charged lipids. In vivo, intradermal injection into healthy human volunteers produce sharp pain sensation and an inflammatory response. It produces pain by activating primary nociceptor cells directly and indirectly due to its ability to activate plasma membrane phospholipase A2 and its pore-forming activity. In the context of inflammation and cancer tests, is highly cytotoxic to normal cells, highly induces calcium signaling and almost completely prevents cAMP production. In addition, prevents LPS-induced nitric oxid (NO) synthesis but does not affect the IP3 signaling and pro-inflammatory activation of endothelial cells. Also shows significant antiproliferative activity on the breast cancer cell line MDA-MB-231. Its function is as follows. Melittin-S: 1.4-fold less hemolytic and adopts a less organized secondary structure than melittin. Functionally, melittin-2: Has strong hemolytic activity. In Apis mellifera (Honeybee), this protein is Melittin (MELT).